Reading from the N-terminus, the 413-residue chain is THAP domain-containing protein 5 (413 aa).

A THAP-type zinc finger spans residues 1–85; sequence MPRYCAASYC…LKHTAVPTIF (85 aa). Residues 84 to 118 are disordered; sequence IFSSPDDEEKGSSQNSPQEIRREDQEETTKNVESK. The segment covering 102–118 has biased composition (basic and acidic residues); that stretch reads EIRREDQEETTKNVESK. Residues 375 to 399 adopt a coiled-coil conformation; that stretch reads RLRSLEALIGQLKQENLLSEEKLKI.

It localises to the nucleus. The protein is THAP domain-containing protein 5 (THAP5) of Gallus gallus (Chicken).